The sequence spans 278 residues: MFLVGSLVVLCGLLAHSTAQLAGLPLPLGQGPPLPLNQGPPLPLNQGQLLPLAQGLPLAVSPALPSNPTDLLAGKFTDALSGGLLSGGLLGILENIPLLDVIKSGGGNSNGLVGGLLGKLTSSVPLLNNILDIKITDPQLLELGLVQSPDGHRLYVTIPLGLTLNVNMPVVGSLLQLAVKLNITAEVLAVKDNQGRIHLVLGDCTHSPGSLKISLLNGVTPVQSFLDNLTGILTKVLPELIQGKVCPLVNGILSGLDVTLVHNIAELLIHGLQFVIKV.

Positions 1-19 (MFLVGSLVVLCGLLAHSTA) are cleaved as a signal peptide. Repeat repeat units lie at residues 23-28 (GLPLPL), 30-36 (QGPPLPL), 39-44 (GPPLPL), and 47-52 (GQLLPL). A 4 X 6 AA repeats of G-[LPQ]-[PL]-L-P-L region spans residues 23 to 52 (GLPLPLGQGPPLPLNQGPPLPLNQGQLLPL). Residues 112–117 (LVGGLL) are important for surfactant activity and antibacterial properties. N-linked (GlcNAc...) asparagine glycans are attached at residues Asn-182 and Asn-228. A disulfide bond links Cys-204 and Cys-246.

This sequence belongs to the BPI/LBP/Plunc superfamily. Plunc family. Monomer. Interacts (via N-terminus) with SCNN1B, a subunit of the heterotrimeric epithelial sodium channel (ENaC); this inhibits proteolytic activation of ENaC. In terms of tissue distribution, detected in airway epithelia (trachea and lung) and in bronchoalveolar fluid (at protein level). Upper airways, nasopharyngeal epithelium and thymus. Highest expression in the trachea and progressive decrease from proximal (bronchial) to distal (bronchiolar) airways. No expression is detected in the terminal bronchioles, respiratory bronchioles or lung alveoli.

The protein localises to the secreted. In terms of biological role, lipid-binding protein which shows high specificity for the surfactant phospholipid dipalmitoylphosphatidylcholine (DPPC). Plays a role in the innate immune responses of the upper airways. Reduces the surface tension in secretions from airway epithelia and inhibits the formation of biofilm by pathogenic Gram-negative bacteria, such as P.aeruginosa and K.pneumoniae. Negatively regulates proteolytic cleavage of SCNN1G, an event that is required for activation of the epithelial sodium channel (ENaC), and thereby contributes to airway surface liquid homeostasis and proper clearance of mucus. Plays a role in the airway inflammatory response after exposure to irritants. May attract macrophages and neutrophils. This is BPI fold-containing family A member 1 (Bpifa1) from Mus musculus (Mouse).